We begin with the raw amino-acid sequence, 324 residues long: Acetaldehyde dehydrogenase 1 (324 aa).

NAD(+) is bound at residue 18-21 (SGNI). Cys136 functions as the Acyl-thioester intermediate in the catalytic mechanism. NAD(+) is bound by residues 167–175 (SAGPGTRAN) and Asn297.

It belongs to the acetaldehyde dehydrogenase family.

The enzyme catalyses acetaldehyde + NAD(+) + CoA = acetyl-CoA + NADH + H(+). In Parafrankia sp. (strain EAN1pec), this protein is Acetaldehyde dehydrogenase 1.